Reading from the N-terminus, the 206-residue chain is Ribosomal RNA large subunit methyltransferase E (206 aa).

The S-adenosyl-L-methionine site is built by glycine 60, tryptophan 62, aspartate 80, aspartate 96, and aspartate 121. The active-site Proton acceptor is lysine 161.

It belongs to the class I-like SAM-binding methyltransferase superfamily. RNA methyltransferase RlmE family.

Its subcellular location is the cytoplasm. The enzyme catalyses uridine(2552) in 23S rRNA + S-adenosyl-L-methionine = 2'-O-methyluridine(2552) in 23S rRNA + S-adenosyl-L-homocysteine + H(+). In terms of biological role, specifically methylates the uridine in position 2552 of 23S rRNA at the 2'-O position of the ribose in the fully assembled 50S ribosomal subunit. In Legionella pneumophila (strain Paris), this protein is Ribosomal RNA large subunit methyltransferase E.